Here is a 270-residue protein sequence, read N- to C-terminus: Putative pyruvate, phosphate dikinase regulatory protein (270 aa).

149–156 (GVSRTSKT) is a binding site for ADP.

This sequence belongs to the pyruvate, phosphate/water dikinase regulatory protein family. PDRP subfamily.

It carries out the reaction N(tele)-phospho-L-histidyl/L-threonyl-[pyruvate, phosphate dikinase] + ADP = N(tele)-phospho-L-histidyl/O-phospho-L-threonyl-[pyruvate, phosphate dikinase] + AMP + H(+). The enzyme catalyses N(tele)-phospho-L-histidyl/O-phospho-L-threonyl-[pyruvate, phosphate dikinase] + phosphate + H(+) = N(tele)-phospho-L-histidyl/L-threonyl-[pyruvate, phosphate dikinase] + diphosphate. Its function is as follows. Bifunctional serine/threonine kinase and phosphorylase involved in the regulation of the pyruvate, phosphate dikinase (PPDK) by catalyzing its phosphorylation/dephosphorylation. The protein is Putative pyruvate, phosphate dikinase regulatory protein of Sphingopyxis alaskensis (strain DSM 13593 / LMG 18877 / RB2256) (Sphingomonas alaskensis).